The sequence spans 1497 residues: Dual oxidase 1 (1497 aa).

The signal sequence occupies residues 1–21 (MRSKHVLYIAILFSSIFGGKG). Topologically, residues 22–587 (IQQNEEFQRY…MQSTYWTDND (566 aa)) are extracellular. A peroxidase-like; mediates peroxidase activity region spans residues 26 to 590 (EEFQRYDGWY…TYWTDNDTTY (565 aa)). 4 N-linked (GlcNAc...) asparagine glycosylation sites follow: N66, N305, N567, and N586. A helical membrane pass occupies residues 588-608 (TTYVFTLIGLACVPLICYGIG). At 609–986 (RYLVNRRIAI…VSAFLETYRQ (378 aa)) the chain is on the cytoplasmic side. 2 consecutive EF-hand domains span residues 817–852 (ANNEFVKRMFAMTAKHNEDSLSFNEFLTVLREFVNA) and 853–888 (PQKQKLQTLFKMCDLEGKNKVLRKDLAELVKSLNQT). The chain crosses the membrane as a helical span at residues 987–1007 (HVFIVFCFVAINLVLFFERFW). The Extracellular portion of the chain corresponds to 1008–1024 (HYRYMAENRDLRRVMGA). The chain crosses the membrane as a helical span at residues 1025-1045 (GIAITRGAAGALSFCMALILL). Positions 1030–1210 (RGAAGALSFC…FVIDRIIGLM (181 aa)) constitute a Ferric oxidoreductase domain. The Cytoplasmic portion of the chain corresponds to 1046-1068 (TVCRNIITLLRETVIAQYIPFDS). Residues 1069-1089 (AIAFHKIVALFAAFWATLHTV) form a helical membrane-spanning segment. The Extracellular portion of the chain corresponds to 1090–1134 (GHCVNFYHVGTQSQEGLACLFQEAFFGSNFLPSISYWFFSTITGL). A helical membrane pass occupies residues 1135-1155 (TGIALVAVMCIIYVFALPCFI). Residues 1156–1163 (KRAYHAFR) lie on the Cytoplasmic side of the membrane. The chain crosses the membrane as a helical span at residues 1164–1184 (LTHLLNIAFYALTLLHGLPKL). Topologically, residues 1185–1189 (LDSPK) are extracellular. Residues 1190 to 1210 (FGYYVVGPIVLFVIDRIIGLM) traverse the membrane as a helical segment. One can recognise an FAD-binding FR-type domain in the interval 1211-1318 (QYYKKLEIVN…KGPYGDGNQE (108 aa)). Residues 1211 to 1497 (QYYKKLEIVN…PSFAHRFETF (287 aa)) are Cytoplasmic-facing.

It in the N-terminal section; belongs to the peroxidase family. Interacts with doxa-1 and tsp-15. Interacts with rho-1. As to expression, expressed in hypodermal cells.

It is found in the membrane. The catalysed reaction is NADH + O2 + H(+) = H2O2 + NAD(+). The enzyme catalyses NADPH + O2 + H(+) = H2O2 + NADP(+). With respect to regulation, peroxidase activity is inhibited by aminobenzohydrazide. Its function is as follows. Plays a role in cuticle biogenesis. In complex with doxa-1 and tsp-15, produces reactive oxygen species (ROS), which are probably used by mlt-7 for tyrosine cross-linking, thus stabilizing cuticular extracellular matrix. May regulate the production of ROS by playing a role in modulating proline catabolism. Required in combination with mlt-7 for correct formation of cross-links in cuticle collagens. Association with the GTPase rho-1 promotes ROS production and this interaction may be modulated by memo-1, in order to control the oxidative stress response and longevity. This chain is Dual oxidase 1, found in Caenorhabditis elegans.